Consider the following 413-residue polypeptide: Tyrosine--tRNA ligase (413 aa).

Tyr-33 contributes to the L-tyrosine binding site. Residues 38–47 carry the 'HIGH' region motif; it reads PTADSLHVGH. Residues Tyr-162 and Gln-166 each coordinate L-tyrosine. A 'KMSKS' region motif is present at residues 225 to 229; that stretch reads KFGKT. Residue Lys-228 participates in ATP binding. Positions 346–413 constitute an S4 RNA-binding domain; sequence TSAIDAIVNV…KKKYYLLEIK (68 aa).

This sequence belongs to the class-I aminoacyl-tRNA synthetase family. TyrS type 1 subfamily. In terms of assembly, homodimer.

The protein localises to the cytoplasm. It carries out the reaction tRNA(Tyr) + L-tyrosine + ATP = L-tyrosyl-tRNA(Tyr) + AMP + diphosphate + H(+). Catalyzes the attachment of tyrosine to tRNA(Tyr) in a two-step reaction: tyrosine is first activated by ATP to form Tyr-AMP and then transferred to the acceptor end of tRNA(Tyr). The chain is Tyrosine--tRNA ligase from Mesoplasma florum (strain ATCC 33453 / NBRC 100688 / NCTC 11704 / L1) (Acholeplasma florum).